The primary structure comprises 154 residues: Proteinase inhibitor type-2 P303.51 (154 aa).

An N-terminal signal peptide occupies residues 1–25 (MAVHKEVNFVAYLLIVLGLLVLVSA). A run of 2 repeats spans residues 31-87 (AKAC…DPKK) and 88-147 (PKAC…DEPK). 8 disulfide bridges follow: Cys-34–Cys-122, Cys-38–Cys-118, Cys-46–Cys-128, Cys-58–Cys-95, Cys-61–Cys-79, Cys-62–Cys-91, Cys-68–Cys-104, and Cys-121–Cys-139.

This sequence belongs to the protease inhibitor I20 (potato type II proteinase inhibitor) family.

The sequence is that of Proteinase inhibitor type-2 P303.51 from Solanum tuberosum (Potato).